The primary structure comprises 851 residues: DNA mismatch repair protein MutS (851 aa).

614–621 (GPNMGGKS) lines the ATP pocket.

The protein belongs to the DNA mismatch repair MutS family.

This protein is involved in the repair of mismatches in DNA. It is possible that it carries out the mismatch recognition step. This protein has a weak ATPase activity. This is DNA mismatch repair protein MutS from Yersinia pestis.